The chain runs to 482 residues: Aspartyl/glutamyl-tRNA(Asn/Gln) amidotransferase subunit B (482 aa).

The protein belongs to the GatB/GatE family. GatB subfamily. In terms of assembly, heterotrimer of A, B and C subunits.

The enzyme catalyses L-glutamyl-tRNA(Gln) + L-glutamine + ATP + H2O = L-glutaminyl-tRNA(Gln) + L-glutamate + ADP + phosphate + H(+). It carries out the reaction L-aspartyl-tRNA(Asn) + L-glutamine + ATP + H2O = L-asparaginyl-tRNA(Asn) + L-glutamate + ADP + phosphate + 2 H(+). Functionally, allows the formation of correctly charged Asn-tRNA(Asn) or Gln-tRNA(Gln) through the transamidation of misacylated Asp-tRNA(Asn) or Glu-tRNA(Gln) in organisms which lack either or both of asparaginyl-tRNA or glutaminyl-tRNA synthetases. The reaction takes place in the presence of glutamine and ATP through an activated phospho-Asp-tRNA(Asn) or phospho-Glu-tRNA(Gln). The sequence is that of Aspartyl/glutamyl-tRNA(Asn/Gln) amidotransferase subunit B from Methanoregula boonei (strain DSM 21154 / JCM 14090 / 6A8).